The primary structure comprises 546 residues: Sulfite oxidase, mitochondrial (546 aa).

The N-terminal 80 residues, 1 to 80 (MLLQLYRSVV…YHEHRCRASQ (80 aa)), are a transit peptide targeting the mitochondrion. One can recognise a Cytochrome b5 heme-binding domain in the interval 83–162 (PRMYSKEDVR…LAEYKIGELN (80 aa)). Residue His119 participates in heme b binding. Residue Ser124 is modified to Phosphoserine. Heme b is bound by residues His144, Gln146, and His148. The hinge stretch occupies residues 166 to 175 (SMSPSVEASD). The segment at 176–402 (PYADDPIRHP…YSHWQRRDYK (227 aa)) is moco domain. Mo-molybdopterin is bound by residues 216–220 (FTRNH), Cys265, Asp323, His362, Arg367, and 378–380 (HVK). The interval 403–539 (GFSPSVDWDT…RGVLSNAWHR (137 aa)) is homodimerization.

As to quaternary structure, homodimer. Requires heme b as cofactor. It depends on Mo-molybdopterin as a cofactor.

The protein localises to the mitochondrion intermembrane space. It catalyses the reaction sulfite + O2 + H2O = sulfate + H2O2. It functions in the pathway energy metabolism; sulfur metabolism. Its function is as follows. Catalyzes the oxidation of sulfite to sulfate, the terminal reaction in the oxidative degradation of sulfur-containing amino acids. This is Sulfite oxidase, mitochondrial (Suox) from Mus musculus (Mouse).